We begin with the raw amino-acid sequence, 341 residues long: Cell division protein ZipA (341 aa).

Residues 1-6 (MENLQL) are Periplasmic-facing. A helical membrane pass occupies residues 7-27 (VLFVLGAIAIVAVLVHGFWSI). The Cytoplasmic portion of the chain corresponds to 28 to 341 (RKQQPKSLKE…YLQRIRTQNS (314 aa)). Disordered regions lie at residues 35 to 134 (LKES…PVLS) and 157 to 201 (QSSL…PEPE). Over residues 90-100 (TLTSEGQMDSS) the composition is skewed to polar residues. Residues 175–190 (SIEVPEPVSEPVLESV) show a composition bias toward low complexity. The span at 192-201 (EPEPVAPEPE) shows a compositional bias: pro residues.

It belongs to the ZipA family. As to quaternary structure, interacts with FtsZ via their C-terminal domains.

Its subcellular location is the cell inner membrane. In terms of biological role, essential cell division protein that stabilizes the FtsZ protofilaments by cross-linking them and that serves as a cytoplasmic membrane anchor for the Z ring. Also required for the recruitment to the septal ring of downstream cell division proteins. The polypeptide is Cell division protein ZipA (Shewanella sediminis (strain HAW-EB3)).